Here is a 292-residue protein sequence, read N- to C-terminus: Protoheme IX farnesyltransferase (292 aa).

9 helical membrane passes run 12-32 (ITWL…PQAS), 43-63 (LLRL…TAAL), 94-114 (LAFG…GVNL), 115-135 (LSAG…TPMK), 144-164 (VGAI…AGGL), 169-189 (WVLF…IAWM), 216-236 (IVIY…LGMS), 239-259 (LYLV…VRVA), and 267-287 (ARGV…LMLL).

The protein belongs to the UbiA prenyltransferase family. Protoheme IX farnesyltransferase subfamily.

It is found in the cell inner membrane. The catalysed reaction is heme b + (2E,6E)-farnesyl diphosphate + H2O = Fe(II)-heme o + diphosphate. The protein operates within porphyrin-containing compound metabolism; heme O biosynthesis; heme O from protoheme: step 1/1. Converts heme B (protoheme IX) to heme O by substitution of the vinyl group on carbon 2 of heme B porphyrin ring with a hydroxyethyl farnesyl side group. The sequence is that of Protoheme IX farnesyltransferase from Solibacter usitatus (strain Ellin6076).